We begin with the raw amino-acid sequence, 269 residues long: MKITSISVQQKNKERYNIFIDEKYNFSVDEEVLARYQLMKGKVLTEAKIEEIKQADMVRKGLNKAINFLSHRVRSEKEIRDYLRKQEMEAFAIDEILKKLADMDYINDLEFAELYTKTQIKTTLKGPRTIERELVEKGLTREIITQVIEEYSDEAQLENATKQAIKIMKRNNKSAKKMLQQKIITDLIQKGYTSELAKVAATEATSELDVADEAEILQKQIEKTMRKNKRYKPSIAKQKTITSLMQKGFSYDTIQSYLTENEISFEEEE.

This sequence belongs to the RecX family.

It localises to the cytoplasm. Functionally, modulates RecA activity. The chain is Regulatory protein RecX from Listeria monocytogenes serotype 4b (strain CLIP80459).